Here is a 37-residue protein sequence, read N- to C-terminus: Mating pheromone Er-20 (37 aa).

3 disulfide bridges follow: Cys3-Cys18, Cys10-Cys32, and Cys15-Cys24.

Homodimer.

It localises to the secreted. Mating ciliate pheromones (or gamones) are diffusible extracellular communication signals that distinguish different intraspecific classes of cells commonly referred to as 'mating types'. They prepare the latter for conjugation by changing their cell surface properties. In Euplotes raikovi, this protein is Mating pheromone Er-20 (MAT20).